Reading from the N-terminus, the 450-residue chain is Phosphoglucosamine mutase (450 aa).

Ser-102 acts as the Phosphoserine intermediate in catalysis. Ser-102, Asp-243, Asp-245, and Asp-247 together coordinate Mg(2+). Ser-102 carries the post-translational modification Phosphoserine.

It belongs to the phosphohexose mutase family. The cofactor is Mg(2+). Activated by phosphorylation.

The enzyme catalyses alpha-D-glucosamine 1-phosphate = D-glucosamine 6-phosphate. In terms of biological role, catalyzes the conversion of glucosamine-6-phosphate to glucosamine-1-phosphate. This Allorhizobium ampelinum (strain ATCC BAA-846 / DSM 112012 / S4) (Agrobacterium vitis (strain S4)) protein is Phosphoglucosamine mutase.